The chain runs to 195 residues: Cysteine/O-acetylserine efflux protein (195 aa).

The Periplasmic portion of the chain corresponds to 1–9; it reads MTPMLLSAF. The chain crosses the membrane as a helical span at residues 10 to 32; it reads WTYTLITALTPGPNNILALSAAT. Over 33 to 46 the chain is Cytoplasmic; it reads AHGFRQSIRVLAGM. A helical transmembrane segment spans residues 47–67; it reads SLGFLVVMLLCAGIAFSLAVI. The Periplasmic portion of the chain corresponds to 68-69; it reads DP. The chain crosses the membrane as a helical span at residues 70 to 90; it reads AIIHLLSWVGAAYILWLAWKI. The Cytoplasmic portion of the chain corresponds to 91–104; it reads ATSPAADENARPKP. A helical membrane pass occupies residues 105 to 125; it reads VGFWVSFGLQFVNVKIILYGI. Residues 126-141 lie on the Periplasmic side of the membrane; the sequence is TALSTFVLPQTQALNW. The chain crosses the membrane as a helical span at residues 142–162; the sequence is VIGVSILLALIGTFGNVCWAL. At 163-176 the chain is on the cytoplasmic side; it reads AGHLFQRAFRHYGR. Residues 177–194 form a helical membrane-spanning segment; it reads QLNIILALLLVYCAVRIF. Tyr195 is a topological domain (periplasmic).

The protein belongs to the Rht family.

It is found in the cell inner membrane. The catalysed reaction is O-acetyl-L-serine(in) = O-acetyl-L-serine(out). It catalyses the reaction L-cysteine(in) = L-cysteine(out). Its function is as follows. Exporter of O-acetylserine (OAS) and cysteine. The polypeptide is Cysteine/O-acetylserine efflux protein (eamB) (Salmonella choleraesuis (strain SC-B67)).